Here is a 1390-residue protein sequence, read N- to C-terminus: DNA-directed RNA polymerase III subunit RPC1 (1390 aa).

Zn(2+) contacts are provided by cysteine 69, cysteine 72, cysteine 79, histidine 82, cysteine 109, and cysteine 112. Lysine 144 contacts DNA. Positions 156 and 159 each coordinate Zn(2+). The DNA site is built by lysine 167, serine 326, lysine 348, arginine 353, arginine 360, and arginine 366. Lysine 445 carries the N6-acetyllysine modification. An RNA-binding site is contributed by arginine 464. Residues aspartate 499, aspartate 501, and aspartate 503 each contribute to the Mg(2+) site. Aspartate 503 is a binding site for RNA. A bridging helix region spans residues 844–856; that stretch reads PTEFFFHTMAGRE. Positions 1159, 1305, and 1323 each coordinate DNA.

Belongs to the RNA polymerase beta' chain family. Component of the RNA polymerase III (Pol III) complex consisting of 17 subunits: a ten-subunit catalytic core composed of POLR3A/RPC1, POLR3B/RPC2, POLR1C/RPAC1, POLR1D/RPAC2, POLR3K/RPC10, POLR2E/RPABC1, POLR2F/RPABC2, POLR2H/RPABC3, POLR2K/RPABC4 and POLR2L/RPABC5; a mobile stalk composed of two subunits POLR3H/RPC8 and CRCP/RPC9, protruding from the core and functioning primarily in transcription initiation; and additional subunits homologous to general transcription factors of the RNA polymerase II machinery, POLR3C/RPC3-POLR3F/RPC6-POLR3G/RPC7 heterotrimer required for transcription initiation and POLR3D/RPC4-POLR3E/RPC5 heterodimer involved in both transcription initiation and termination. As part of the RNA polymerase III complex, interacts with PKP2. It depends on Mg(2+) as a cofactor.

Its subcellular location is the nucleus. It localises to the cytoplasm. The protein resides in the cytosol. The enzyme catalyses RNA(n) + a ribonucleoside 5'-triphosphate = RNA(n+1) + diphosphate. Functionally, catalytic core component of RNA polymerase III (Pol III), a DNA-dependent RNA polymerase which synthesizes small non-coding RNAs using the four ribonucleoside triphosphates as substrates. Synthesizes 5S rRNA, snRNAs, tRNAs and miRNAs from at least 500 distinct genomic loci. Pol III-mediated transcription cycle proceeds through transcription initiation, transcription elongation and transcription termination stages. During transcription initiation, Pol III is recruited to DNA promoters type I, II or III with the help of general transcription factors and other specific initiation factors. Once the polymerase has escaped from the promoter it enters the elongation phase during which RNA is actively polymerized, based on complementarity with the template DNA strand. Transcription termination involves the release of the RNA transcript and polymerase from the DNA. Forms Pol III active center together with the second largest subunit POLR3B/RPC2. Appends one nucleotide at a time to the 3' end of the nascent RNA, with POLR3A/RPC1 contributing a Mg(2+)-coordinating DxDGD motif, and POLR3B/RPC2 participating in the coordination of a second Mg(2+) ion and providing lysine residues believed to facilitate Watson-Crick base pairing between the incoming nucleotide and template base. Typically, Mg(2+) ions direct a 5' nucleoside triphosphate to form a phosphodiester bond with the 3' hydroxyl of the preceding nucleotide of the nascent RNA, with the elimination of pyrophosphate. Pol III plays a key role in sensing and limiting infection by intracellular bacteria and DNA viruses. Acts as a nuclear and cytosolic DNA sensor involved in innate immune response. Can sense non-self dsDNA that serves as template for transcription into dsRNA. The non-self RNA polymerase III transcripts, such as Epstein-Barr virus-encoded RNAs (EBERs) induce type I interferon and NF-kappa-B through the RIG-I pathway. The protein is DNA-directed RNA polymerase III subunit RPC1 of Bos taurus (Bovine).